We begin with the raw amino-acid sequence, 100 residues long: Large ribosomal subunit protein uL23 (100 aa).

Belongs to the universal ribosomal protein uL23 family. In terms of assembly, part of the 50S ribosomal subunit. Contacts protein L29, and trigger factor when it is bound to the ribosome.

Its function is as follows. One of the early assembly proteins it binds 23S rRNA. One of the proteins that surrounds the polypeptide exit tunnel on the outside of the ribosome. Forms the main docking site for trigger factor binding to the ribosome. The protein is Large ribosomal subunit protein uL23 of Shewanella oneidensis (strain ATCC 700550 / JCM 31522 / CIP 106686 / LMG 19005 / NCIMB 14063 / MR-1).